Consider the following 975-residue polypeptide: Exocyst complex component 4 (975 aa).

Ala2 carries the N-acetylalanine modification. The residue at position 9 (Lys9) is an N6-acetyllysine. At Ser32 the chain carries Phosphoserine. Positions 32–114 form a coiled coil; sequence STSDDVEDRE…HCKRDELRKL (83 aa). A compositionally biased stretch (basic and acidic residues) spans 211–224; that stretch reads RNKEKGKMSSHGKD. Residues 211–230 are disordered; sequence RNKEKGKMSSHGKDPSPGPL. Residue Ser226 is modified to Phosphoserine. Thr238 carries the post-translational modification Phosphothreonine. The residue at position 469 (Ser469) is a Phosphoserine.

The protein belongs to the SEC8 family. As to quaternary structure, the exocyst complex is composed of EXOC1, EXOC2, EXOC3, EXOC4, EXOC5, EXOC6, EXOC7 and EXOC8. Interacts with BIRC6/bruce. Interacts with MYRIP. Interacts with SH3BP1; required for the localization of both SH3BP1 and the exocyst to the leading edge of migrating cells. Interacts with SLC6A9. As to expression, expressed in the striatum (at protein level).

The protein localises to the midbody. The protein resides in the midbody ring. It localises to the cell projection. Its subcellular location is the cytoplasm. It is found in the cytoskeleton. The protein localises to the microtubule organizing center. The protein resides in the centrosome. Its function is as follows. Component of the exocyst complex involved in the docking of exocytic vesicles with fusion sites on the plasma membrane. In Mus musculus (Mouse), this protein is Exocyst complex component 4 (Exoc4).